The primary structure comprises 329 residues: Phosphate acetyltransferase (329 aa).

It belongs to the phosphate acetyltransferase and butyryltransferase family.

The protein localises to the cytoplasm. It carries out the reaction acetyl-CoA + phosphate = acetyl phosphate + CoA. It participates in metabolic intermediate biosynthesis; acetyl-CoA biosynthesis; acetyl-CoA from acetate: step 2/2. This is Phosphate acetyltransferase (pta) from Corynebacterium glutamicum (strain ATCC 13032 / DSM 20300 / JCM 1318 / BCRC 11384 / CCUG 27702 / LMG 3730 / NBRC 12168 / NCIMB 10025 / NRRL B-2784 / 534).